We begin with the raw amino-acid sequence, 714 residues long: Polyribonucleotide nucleotidyltransferase (714 aa).

Mg(2+)-binding residues include Asp-488 and Asp-494. The KH domain maps to 555-614; it reads PRIEVMNIPVDKIREVIGSGGKVIREIVEKTGAKINIDDDGTVKIASASGKEIEAARKWI. The region spanning 624-692 is the S1 motif domain; sequence GQVYEGTVVK…ERGKVRLSMK (69 aa).

This sequence belongs to the polyribonucleotide nucleotidyltransferase family. Mg(2+) serves as cofactor.

It localises to the cytoplasm. The enzyme catalyses RNA(n+1) + phosphate = RNA(n) + a ribonucleoside 5'-diphosphate. Functionally, involved in mRNA degradation. Catalyzes the phosphorolysis of single-stranded polyribonucleotides processively in the 3'- to 5'-direction. This chain is Polyribonucleotide nucleotidyltransferase, found in Sinorhizobium medicae (strain WSM419) (Ensifer medicae).